We begin with the raw amino-acid sequence, 588 residues long: Tripartite motif-containing protein 29 (588 aa).

The interval M1–R66 is disordered. Phosphoserine is present on residues S21, S28, S58, and S104. Phosphotyrosine is present on Y106. Residues F220–V260 form a B box-type zinc finger. Zn(2+)-binding residues include C225, H228, C247, and H252. Positions T259–E352 form a coiled coil. T476 carries the phosphothreonine modification. A Phosphoserine modification is found at S489.

As to quaternary structure, interacts with VIM and HINT1. Interacts with IKBKG/NEMO. Interacts with STING1. Post-translationally, constitutively phosphorylated by PKC on serine/threonine in A431 cells. In terms of tissue distribution, expressed in placenta, prostate and thymus.

The protein resides in the cytoplasm. The protein localises to the lysosome. Plays a crucial role in the regulation of macrophage activation in response to viral or bacterial infections within the respiratory tract. Mechanistically, TRIM29 interacts with IKBKG/NEMO in the lysosome where it induces its 'Lys-48' ubiquitination and subsequent degradation. In turn, the expression of type I interferons and the production of pro-inflammatory cytokines are inhibited. Additionally, induces the 'Lys-48' ubiquitination of STING1 in a similar way, leading to its degradation. This is Tripartite motif-containing protein 29 (TRIM29) from Homo sapiens (Human).